Reading from the N-terminus, the 186-residue chain is Peptide deformylase (186 aa).

Cys99 and His141 together coordinate Fe cation. The active site involves Glu142. Residue His145 coordinates Fe cation.

The protein belongs to the polypeptide deformylase family. It depends on Fe(2+) as a cofactor.

It catalyses the reaction N-terminal N-formyl-L-methionyl-[peptide] + H2O = N-terminal L-methionyl-[peptide] + formate. Its function is as follows. Removes the formyl group from the N-terminal Met of newly synthesized proteins. Requires at least a dipeptide for an efficient rate of reaction. N-terminal L-methionine is a prerequisite for activity but the enzyme has broad specificity at other positions. This Chlamydia pneumoniae (Chlamydophila pneumoniae) protein is Peptide deformylase.